The following is a 162-amino-acid chain: Interleukin-15 (162 aa).

An N-terminal signal peptide occupies residues 1–29; that stretch reads MRISKPHLRSISIQCYLCLLLKSHFLTEA. A propeptide spanning residues 30-48 is cleaved from the precursor; that stretch reads GIHVFILGCFSAGLPKTEA. 2 cysteine pairs are disulfide-bonded: Cys-83–Cys-133 and Cys-90–Cys-136. Residue Asn-127 is glycosylated (N-linked (GlcNAc...) asparagine).

It belongs to the IL-15/IL-21 family.

It localises to the secreted. Its function is as follows. Cytokine that plays a major role in the development of inflammatory and protective immune responses to microbial invaders and parasites by modulating immune cells of both the innate and adaptive immune systems. Stimulates the proliferation of natural killer cells, T-cells and B-cells and promotes the secretion of several cytokines. In monocytes, induces the production of IL8 and monocyte chemotactic protein 1/CCL2, two chemokines that attract neutrophils and monocytes respectively to sites of infection. Unlike most cytokines, which are secreted in soluble form, IL15 is expressed in association with its high affinity IL15RA on the surface of IL15-producing cells and delivers signals to target cells that express IL2RB and IL2RG receptor subunits. Binding to its receptor triggers the phosphorylation of JAK1 and JAK3 and the recruitment and subsequent phosphorylation of signal transducer and activator of transcription-3/STAT3 and STAT5. In mast cells, induces the rapid tyrosine phosphorylation of STAT6 and thereby controls mast cell survival and release of cytokines such as IL4. This chain is Interleukin-15 (IL15), found in Chlorocebus aethiops (Green monkey).